A 299-amino-acid chain; its full sequence is Non-structural protein V (299 aa).

Residues Ser40 to Arg98 are disordered. An interaction with host STAT1 region spans residues Tyr110–Val120. Residues Gly134–Asp145 show a composition bias toward low complexity. 2 disordered regions span residues Gly134–Ser174 and Pro204–Lys230. Residues Asn146 to Thr160 are compositionally biased toward acidic residues. Zn(2+) is bound by residues His232, Cys251, Cys255, Cys267, Cys269, Cys272, Cys276, and Cys279.

The protein belongs to the paramyxoviruses V protein family. As to quaternary structure, interacts with host IFIH1/MDA5 and DHX58/LGP2; these interactions are involved in the inhibition of the host type I interferon signaling pathway. Interacts with host TYK2; this interaction inhibits the type I interferon signaling pathway without affecting the type II pathway. Interacts with host IRF7; this interaction inhibits IRF7 translocation to the nucleus. Interacts with host CHUK. Interacts with host RELA/p65; this interaction inhibits the nuclear translocation of NF-KappaB. Interacts (via N-terminus) with host STAT1 and JAK1; these interactions inhibit STAT1 phosphorylation by Jak1 and thereby the type I interferon signaling pathway. Interacts (via C-terminus) with host STAT2; this interaction is involved in the inhibition of the host type I interferon signaling pathway. Forms a complex with host PPP1CA and PPP1CC; this interaction prevents dephosphorylation of host IFIH1/MDA5 and leads to the inhibition of the host type I interferon signaling pathway. Interacts with host IRF9; this interaction prevents the binding of IRF9 to STAT2 and thereby the type I interferon signaling pathway. Interacts with host RIGI regulatory protein (via CARDs domain) and host TRIM25 (via SPRY domain); these interactions prevent TRIM25-mediated ubiquitination of RIG-I and disrupts downstream RIG-I signaling.

Its subcellular location is the host cytoplasm. In terms of biological role, plays an essential role in the inhibition of host immune response. Prevents the establishment of cellular antiviral state by blocking interferon-alpha/beta (IFN-alpha/beta) production and signaling pathway. Interacts with host IFIH1/MDA5 and DHX58/LGP2 to inhibit the transduction pathway involved in the activation of IFN-beta promoter, thus protecting the virus against cell antiviral state. Blocks the type I interferon signaling pathway by interacting with host TYK2 and thereby inhibiting downstream STAT1 and STAT2 phosphorylation. Blocks the type I interferon signaling pathway by disrupting the RIG-I signaling pathway. Moderately affects the type II interferon signaling. Prevents PP1alpha/gamma-mediated dephosphorylation of host IFIH1/MDA5 and thus blocks its activation. This Measles virus (strain IP-3-Ca) (MeV) protein is Non-structural protein V (P/V).